The following is a 321-amino-acid chain: Gap junction delta-2 protein (321 aa).

The Cytoplasmic portion of the chain corresponds to 1-19 (MGEWTILERLLEAAVQQHS). The chain crosses the membrane as a helical span at residues 20-42 (TMIGRILLTVVVIFRILIVAIVG). Residues 43–75 (ETVYDDEQTMFVCNTLQPGCNQACYDRAFPISH) lie on the Extracellular side of the membrane. The helical transmembrane segment at 76–98 (IRYWVFQIIMVCTPSLCFITYSV) threads the bilayer. Topologically, residues 99–197 (HQSAKQRERR…KLRRQEGISR (99 aa)) are cytoplasmic. The disordered stretch occupies residues 120-141 (PAESIGGPGGTGGGGSGGSKRE). The span at 125–137 (GGPGGTGGGGSGG) shows a compositional bias: gly residues. Residues 198–220 (FYIIQVVFRNALEIGFLVGQYFL) traverse the membrane as a helical segment. Residues 221–252 (YGFSVPGLYECNRYPCIKEVECYVSRPTEKTV) are Extracellular-facing. A helical membrane pass occupies residues 253 to 275 (FLVFMFAVSGICVVLNLAELNHL). The Cytoplasmic portion of the chain corresponds to 276-321 (GWRKIKLAVRGAQAKRKSVYEIRNKDLPRVSVPNFGRTQSSDSAYV).

The protein belongs to the connexin family. Delta-type subfamily. A connexon is composed of a hexamer of connexins. Highly expressed in neurons.

It is found in the cell membrane. Its subcellular location is the cell junction. The protein resides in the gap junction. One gap junction consists of a cluster of closely packed pairs of transmembrane channels, the connexons, through which materials of low MW diffuse from one cell to a neighboring cell. This Rattus norvegicus (Rat) protein is Gap junction delta-2 protein (Gjd2).